Here is a 1064-residue protein sequence, read N- to C-terminus: WD repeat-containing protein on Y chromosome (1064 aa).

8 WD repeats span residues 150–194, 317–356, 360–399, 450–489, 502–541, 589–629, 742–781, and 825–864; these read EEVT…IRTA, RIPL…EPSA, GHNG…LLQT, THAA…RKII, IIDI…VVRN, FHTD…RRYS, KTGD…VPAS, and GHLK…LGTL. Residues 1022-1044 form a disordered region; it reads SSLNIKQPTRRRSGKTHDPRNIR.

This chain is WD repeat-containing protein on Y chromosome, found in Drosophila ananassae (Fruit fly).